The primary structure comprises 256 residues: Ras-related protein Rab-26 (256 aa).

The tract at residues 1 to 51 (MSRKKTPKSKGASTPAASTLPTANGARPARSGTALSGPDAPPNGPLQPGRP) is disordered. Residues 12–23 (ASTPAASTLPTA) show a composition bias toward low complexity. GTP is bound by residues S72, G73, V74, G75, K76, T77, C78, S95, and T96. T77 is a Mg(2+) binding site. 2 short sequence motifs (switch) span residues 86 to 101 (GAFL…GIDF) and 119 to 136 (DTAG…YYRD). Mg(2+) contacts are provided by T96 and D119. The GTP site is built by G122, N177, K178, D180, A208, and K209. S-geranylgeranyl cysteine attachment occurs at residues C253 and C254.

This sequence belongs to the small GTPase superfamily. Rab family. Interacts with RIMS1. Interacts with ADRA2B. Mg(2+) serves as cofactor. In terms of tissue distribution, predominantly expressed in brain.

It is found in the golgi apparatus membrane. Its subcellular location is the cytoplasmic vesicle. The protein localises to the secretory vesicle membrane. The catalysed reaction is GTP + H2O = GDP + phosphate + H(+). Regulated by guanine nucleotide exchange factors (GEFs) which promote the exchange of bound GDP for free GTP. Regulated by GTPase activating proteins (GAPs) which increase the GTP hydrolysis activity. Inhibited by GDP dissociation inhibitors (GDIs). In terms of biological role, the small GTPases Rab are key regulators of intracellular membrane trafficking, from the formation of transport vesicles to their fusion with membranes. Rabs cycle between an inactive GDP-bound form and an active GTP-bound form that is able to recruit to membranes different set of downstream effectors directly responsible for vesicle formation, movement, tethering and fusion. RAB26 mediates transport of ADRA2A and ADRA2B from the Golgi to the cell membrane. Plays a role in the maturation of zymogenic granules and in pepsinogen secretion in the stomach. Plays a role in the secretion of amylase from acinar granules in the parotid gland. In Homo sapiens (Human), this protein is Ras-related protein Rab-26.